Reading from the N-terminus, the 78-residue chain is Large ribosomal subunit protein bL28 (78 aa).

Belongs to the bacterial ribosomal protein bL28 family.

The protein is Large ribosomal subunit protein bL28 of Marinobacter nauticus (strain ATCC 700491 / DSM 11845 / VT8) (Marinobacter aquaeolei).